The primary structure comprises 261 residues: L-erythrulose-1-phosphate isomerase (261 aa).

The active-site Electrophile is the His99. Glu172 acts as the Proton acceptor in catalysis.

This sequence belongs to the triosephosphate isomerase family.

It catalyses the reaction L-erythrulose 1-phosphate = D-erythrulose 4-phosphate. The protein operates within carbohydrate metabolism. Involved in catabolism of D-apiose. Catalyzes the isomerization of L-erythrulose 1-phosphate to D-erythrulose 4-phosphate. The sequence is that of L-erythrulose-1-phosphate isomerase from Rhizobium rhizogenes (strain K84 / ATCC BAA-868) (Agrobacterium radiobacter).